The following is a 226-amino-acid chain: Ribonuclease 3 (226 aa).

The RNase III domain maps to 7 to 129 (DARLQQALGY…LFGAVFLDAG (123 aa)). Residue E42 participates in Mg(2+) binding. D46 is an active-site residue. 2 residues coordinate Mg(2+): D115 and E118. E118 is a catalytic residue. The DRBM domain maps to 156 to 226 (DPKTRLQEIL…ARQACAELQR (71 aa)).

It belongs to the ribonuclease III family. In terms of assembly, homodimer. Requires Mg(2+) as cofactor.

It localises to the cytoplasm. The catalysed reaction is Endonucleolytic cleavage to 5'-phosphomonoester.. Digests double-stranded RNA. Involved in the processing of primary rRNA transcript to yield the immediate precursors to the large and small rRNAs (23S and 16S). Processes some mRNAs, and tRNAs when they are encoded in the rRNA operon. Processes pre-crRNA and tracrRNA of type II CRISPR loci if present in the organism. This is Ribonuclease 3 from Thiobacillus denitrificans (strain ATCC 25259 / T1).